Here is a 571-residue protein sequence, read N- to C-terminus: MKRQRAIELDRVKKTMLNIDWDDALGDEEVPELEIIATDKIPPREPTLSGYEPAVSVRSLRDNELDDHLKRQRSLLTRLGDKLADKGEKIRNRIGELEYEKQRRMFQQRTKMQDADNGCQILEKPKSSDVFMRASTASKDTSGQGTSGSKDVSRSTFAAHFSDNLKMGPQPVKLVNDKLQDLGRGSWISKANRDSIIEKNNVWRSLPRLSKCKVSLKNFYSESKDPKGDRRPNEAYGKGKPNESSPYLLVDDDDGDDDKVIGYETPRHWSLKASPLQSSSCRKKSDDKVINLDEDEPLSPMVVEEACELPEGLPEDIYYPSSDQSDGRDLVQVSLKDLKCLSPGEYLTSPVINFYIRYVQHHVFSADKTAANCHFFNTFFYKKLTEAVSYKGNDRDAYFVKFRRWWKGFDLFCKSYIFIPIHEDLHWSLVIICIPDKEDESGLTIIHLDSLGLHPRNLIFNNVKRFLREEWNYLNQDAPLDLPISAKVWRDLPNMINEAEVQVPQQKNDFDCGLFLLFFIRRFIEEAPQRLTLQDLKMIHKKWFKPEEASALRIKIWNILVDLFRKGNQTD.

Residues 221–260 (SESKDPKGDRRPNEAYGKGKPNESSPYLLVDDDDGDDDKV) form a disordered region. Over residues 222-233 (ESKDPKGDRRPN) the composition is skewed to basic and acidic residues. Residues histidine 426, aspartate 449, and cysteine 512 contribute to the active site.

It belongs to the peptidase C48 family.

It localises to the nucleus. It is found in the nucleoplasm. Protease that catalyzes two essential functions in the SUMO pathway: processing of full-length SUMOs to their mature forms and deconjugation of SUMO from targeted proteins. Cleaves precursors of SUM1 and SUM2, but not of SUM3 or SUM5. Able to release SUM1 and SUM2 from conjugates, but unable to cleave SUM3. Protease activity mainly directed at deconjugating SUM1 and SUM2 from their target proteins. Regulates salt stress responses and flowering time. Redundant with ULP1D. This Arabidopsis thaliana (Mouse-ear cress) protein is Ubiquitin-like-specific protease 1C (ULP1C).